The sequence spans 124 residues: Conotoxin Cl14.12 (124 aa).

Positions 1–17 are cleaved as a signal peptide; sequence MKVAVVLLVSLLAVTYA. The propeptide occupies 18–74; it reads LPEKRIFFGGIVDKVKDTFTKIFNKAKETFDKITDGFDVDFDEVVDKLIAQIHSTPT.

In terms of processing, contains 2 disulfide bond. In terms of tissue distribution, expressed by the venom duct.

It localises to the secreted. The polypeptide is Conotoxin Cl14.12 (Californiconus californicus (California cone)).